The chain runs to 184 residues: Photosystem I assembly protein Ycf4 (184 aa).

The next 2 membrane-spanning stretches (helical) occupy residues 22–42 (FCWAFILFVGSVGFLLVGISS) and 57–77 (IVFFPQGIVMSFYGIAGLFIS).

The protein belongs to the Ycf4 family.

It localises to the plastid. It is found in the chloroplast thylakoid membrane. Functionally, seems to be required for the assembly of the photosystem I complex. This chain is Photosystem I assembly protein Ycf4, found in Coffea arabica (Arabian coffee).